Here is a 192-residue protein sequence, read N- to C-terminus: Cytidylate kinase (192 aa).

Residue 7–15 coordinates ATP; the sequence is GPPGSGKST.

Belongs to the cytidylate kinase family. Type 2 subfamily.

The protein resides in the cytoplasm. The enzyme catalyses CMP + ATP = CDP + ADP. The catalysed reaction is dCMP + ATP = dCDP + ADP. This Halorubrum lacusprofundi (strain ATCC 49239 / DSM 5036 / JCM 8891 / ACAM 34) protein is Cytidylate kinase.